The primary structure comprises 276 residues: Thiazole synthase (276 aa).

Lys112 functions as the Schiff-base intermediate with DXP in the catalytic mechanism. Residues Gly173, 199–200 (AG), and 221–222 (NT) contribute to the 1-deoxy-D-xylulose 5-phosphate site.

It belongs to the ThiG family. Homotetramer. Forms heterodimers with either ThiH or ThiS.

The protein localises to the cytoplasm. The catalysed reaction is [ThiS sulfur-carrier protein]-C-terminal-Gly-aminoethanethioate + 2-iminoacetate + 1-deoxy-D-xylulose 5-phosphate = [ThiS sulfur-carrier protein]-C-terminal Gly-Gly + 2-[(2R,5Z)-2-carboxy-4-methylthiazol-5(2H)-ylidene]ethyl phosphate + 2 H2O + H(+). It participates in cofactor biosynthesis; thiamine diphosphate biosynthesis. Its function is as follows. Catalyzes the rearrangement of 1-deoxy-D-xylulose 5-phosphate (DXP) to produce the thiazole phosphate moiety of thiamine. Sulfur is provided by the thiocarboxylate moiety of the carrier protein ThiS. In vitro, sulfur can be provided by H(2)S. This Synechococcus sp. (strain ATCC 27144 / PCC 6301 / SAUG 1402/1) (Anacystis nidulans) protein is Thiazole synthase.